A 110-amino-acid chain; its full sequence is Late cornified envelope protein 2C (110 aa).

The span at 1 to 10 shows a compositional bias: low complexity; sequence MSCQQNQQQC. The segment at 1–23 is disordered; the sequence is MSCQQNQQQCQPPPKCPPKCTPK. Over residues 11–23 the composition is skewed to pro residues; it reads QPPPKCPPKCTPK.

Belongs to the LCE family. Interacts with CYSRT1; the interaction is direct. As to expression, skin-specific. Expression was readily detected in adult trunk skin, adult arm skin, fetal skin, penal skin, vulva, esophagus and tongue. Not expressed in the cervix, rectum, lung, colon, or placenta.

In terms of biological role, precursors of the cornified envelope of the stratum. The sequence is that of Late cornified envelope protein 2C (LCE2C) from Homo sapiens (Human).